The primary structure comprises 353 residues: MSSTALYTVPTAGPDDVAALKALDGHSASDILAVIGKTEGNGCVNDFSRTLSAAVWHPLLEDSAITVFSGGAEGVISPHVNIFVRDERQYSGHPRGLVTAVGRTRVIGPEEIGRPAQVDAVHETVVALLTELGVGPDDVHLVLIKCPLLSSDAIAGVHRRGLRPVTTDTYESMSRSRAASALGIAMALKECDRDRALLALEGRDDVWSARASASSGAELDDCHILVVAESDAAANPLRAAHTAMRDALDIQALTEVFDRIAAEGGTVRQIFAKAEADPSGAIRGYRHTMLTDSDVNATRHARAAVGGLIAALHGNGAVYVSGGAEHQGPSGGGSVTVIYDVPATANATGEASR.

The segment at 1-90 is RU A; the sequence is MSSTALYTVP…NIFVRDERQY (90 aa). Substrate-binding positions include Arg49 and 69-70; that span reads SG. The segment at 96-231 is RU B; it reads GLVTAVGRTR…CHILVVAESD (136 aa). Residue Lys145 is part of the active site. Residues Arg177 and 214 to 215 each bind substrate; that span reads SS. Catalysis depends on Ser214, which acts as the Nucleophile. An RU C region spans residues 237-353; the sequence is LRAAHTAMRD…TANATGEASR (117 aa). Glu275 contacts Mg(2+). Substrate contacts are provided by residues Arg302 and 321–322; that span reads SG. Mg(2+) is bound by residues Ala324, Gln327, Gly328, Pro329, and Gly332.

This sequence belongs to the cyclic amide hydrolase (CyAH) family. As to quaternary structure, homotetramer.

The enzyme catalyses cyanurate + H2O = 1-carboxybiuret + H(+). It participates in xenobiotic degradation; atrazine degradation; biuret from cyanurate: step 1/1. Inhibited by barbituric acid. In terms of biological role, responsible for the hydrolysis of cyanuric acid, an intermediate formed during catabolism of s-triazine based compounds in herbicides such as atrazine and polymers such as melamine. Catalyzes the hydrolytic opening of the s-triazine ring of cyanuric acid (2,4,6-trihydroxy-s-triazine) to yield carbon dioxide and carboxybiuret, which spontaneously decarboxylates to biuret. Required for growth on melamine or cyanuric acid as sole nitrogen source. The sequence is that of Cyanuric acid amidohydrolase from Rhodococcus sp.